Consider the following 215-residue polypeptide: Superoxide dismutase [Mn] (215 aa).

The Mn(2+) site is built by His-27, His-83, Asp-170, and His-174.

It belongs to the iron/manganese superoxide dismutase family. Homodimer. Mn(2+) is required as a cofactor.

The enzyme catalyses 2 superoxide + 2 H(+) = H2O2 + O2. Functionally, destroys superoxide anion radicals which are normally produced within the cells and which are toxic to biological systems. This chain is Superoxide dismutase [Mn] (sodA), found in Haemophilus influenzae (strain ATCC 51907 / DSM 11121 / KW20 / Rd).